The following is a 432-amino-acid chain: Cytochrome c biogenesis protein CcsB (432 aa).

The next 3 helical transmembrane spans lie at 18–38, 76–96, and 166–186; these read LRLA…GTGI, SGWF…CSWR, and VGPL…AWGA.

The protein belongs to the Ccs1/CcsB family. As to quaternary structure, may interact with CcsA.

The protein resides in the cellular thylakoid membrane. Its function is as follows. Required during biogenesis of c-type cytochromes (cytochrome c6 and cytochrome f) at the step of heme attachment. This Synechococcus sp. (strain CC9605) protein is Cytochrome c biogenesis protein CcsB.